The following is a 258-amino-acid chain: Thiazole synthase 2 (258 aa).

Residue K97 is the Schiff-base intermediate with DXP of the active site. Residues G158, 184–185 (AG), and 206–207 (NT) each bind 1-deoxy-D-xylulose 5-phosphate.

Belongs to the ThiG family. Homotetramer. Forms heterodimers with either ThiH or ThiS.

It localises to the cytoplasm. The enzyme catalyses [ThiS sulfur-carrier protein]-C-terminal-Gly-aminoethanethioate + 2-iminoacetate + 1-deoxy-D-xylulose 5-phosphate = [ThiS sulfur-carrier protein]-C-terminal Gly-Gly + 2-[(2R,5Z)-2-carboxy-4-methylthiazol-5(2H)-ylidene]ethyl phosphate + 2 H2O + H(+). It functions in the pathway cofactor biosynthesis; thiamine diphosphate biosynthesis. Catalyzes the rearrangement of 1-deoxy-D-xylulose 5-phosphate (DXP) to produce the thiazole phosphate moiety of thiamine. Sulfur is provided by the thiocarboxylate moiety of the carrier protein ThiS. In vitro, sulfur can be provided by H(2)S. This Syntrophotalea carbinolica (strain DSM 2380 / NBRC 103641 / GraBd1) (Pelobacter carbinolicus) protein is Thiazole synthase 2.